Here is a 75-residue protein sequence, read N- to C-terminus: Exodeoxyribonuclease 7 small subunit (75 aa).

The protein belongs to the XseB family. In terms of assembly, heterooligomer composed of large and small subunits.

The protein resides in the cytoplasm. It catalyses the reaction Exonucleolytic cleavage in either 5'- to 3'- or 3'- to 5'-direction to yield nucleoside 5'-phosphates.. Bidirectionally degrades single-stranded DNA into large acid-insoluble oligonucleotides, which are then degraded further into small acid-soluble oligonucleotides. The protein is Exodeoxyribonuclease 7 small subunit of Citrifermentans bemidjiense (strain ATCC BAA-1014 / DSM 16622 / JCM 12645 / Bem) (Geobacter bemidjiensis).